The primary structure comprises 128 residues: Large ribosomal subunit protein uL22 (128 aa).

Belongs to the universal ribosomal protein uL22 family. Part of the 50S ribosomal subunit.

In terms of biological role, this protein binds specifically to 23S rRNA; its binding is stimulated by other ribosomal proteins, e.g. L4, L17, and L20. It is important during the early stages of 50S assembly. It makes multiple contacts with different domains of the 23S rRNA in the assembled 50S subunit and ribosome. Its function is as follows. The globular domain of the protein is located near the polypeptide exit tunnel on the outside of the subunit, while an extended beta-hairpin is found that lines the wall of the exit tunnel in the center of the 70S ribosome. The chain is Large ribosomal subunit protein uL22 from Nitrobacter winogradskyi (strain ATCC 25391 / DSM 10237 / CIP 104748 / NCIMB 11846 / Nb-255).